We begin with the raw amino-acid sequence, 141 residues long: Nucleoside diphosphate kinase (141 aa).

Positions 11, 59, 87, 93, 104, and 114 each coordinate ATP. The Pros-phosphohistidine intermediate role is filled by His-117.

The protein belongs to the NDK family. As to quaternary structure, homotetramer. It depends on Mg(2+) as a cofactor.

It localises to the cytoplasm. The catalysed reaction is a 2'-deoxyribonucleoside 5'-diphosphate + ATP = a 2'-deoxyribonucleoside 5'-triphosphate + ADP. It carries out the reaction a ribonucleoside 5'-diphosphate + ATP = a ribonucleoside 5'-triphosphate + ADP. Functionally, major role in the synthesis of nucleoside triphosphates other than ATP. The ATP gamma phosphate is transferred to the NDP beta phosphate via a ping-pong mechanism, using a phosphorylated active-site intermediate. The polypeptide is Nucleoside diphosphate kinase (Albidiferax ferrireducens (strain ATCC BAA-621 / DSM 15236 / T118) (Rhodoferax ferrireducens)).